Here is a 95-residue protein sequence, read N- to C-terminus: Small ribosomal subunit protein bS18 (95 aa).

This sequence belongs to the bacterial ribosomal protein bS18 family. In terms of assembly, part of the 30S ribosomal subunit. Forms a tight heterodimer with protein bS6.

Its function is as follows. Binds as a heterodimer with protein bS6 to the central domain of the 16S rRNA, where it helps stabilize the platform of the 30S subunit. In Rickettsia akari (strain Hartford), this protein is Small ribosomal subunit protein bS18.